We begin with the raw amino-acid sequence, 541 residues long: Probable inorganic phosphate transporter 1-12 (541 aa).

Residues 1–26 lie on the Cytoplasmic side of the membrane; it reads MGRQDQQLQVLNALDAAKTQWYHFTA. A helical membrane pass occupies residues 27 to 47; that stretch reads IIVAGMGFFTDAYDLFCISLV. Topologically, residues 48–70 are extracellular; it reads TKLLGRIYYTDPASPTPGSLPPN. A helical membrane pass occupies residues 71 to 91; that stretch reads IAAAVNGVALCGTLSGQLFFG. The Cytoplasmic segment spans residues 92-100; that stretch reads WLGDKLGRK. Residues 101–121 form a helical membrane-spanning segment; it reads SVYGMTLLLMVICSIASGLSF. Over 122–124 the chain is Extracellular; it reads SHT. A helical membrane pass occupies residues 125–145; it reads PTSVMATLCFFRFWLGFGIGG. Residues 146–163 lie on the Cytoplasmic side of the membrane; that stretch reads DYPLSATIMSEYANKKTR. Residues 164–184 traverse the membrane as a helical segment; it reads GAFIAAVFAMQGFGILAGGVV. The Extracellular portion of the chain corresponds to 185–213; it reads TLAMSAGFQAAFPAPAYEVNAAASTVPQA. The helical transmembrane segment at 214–234 threads the bilayer; sequence DYVWRIILMLGALPAILTYYW. The Cytoplasmic portion of the chain corresponds to 235–297; the sequence is RMKMPETARY…ARFAKRHGAH (63 aa). The chain crosses the membrane as a helical span at residues 298–318; it reads LLGTAATWFLVDVAYYSQNLF. The Extracellular portion of the chain corresponds to 319 to 349; the sequence is QKDIFTSIHWIPKARTMSELEEVFRISRAQT. The helical transmembrane segment at 350–370 threads the bilayer; the sequence is LIALCGTVPGYWFTVFLIDII. Topologically, residues 371–374 are cytoplasmic; the sequence is GRFK. Residues 375–395 form a helical membrane-spanning segment; sequence IQLLGFAGMTAFMLGLAIPYH. The Extracellular portion of the chain corresponds to 396–403; sequence HWTMPGNQ. A helical transmembrane segment spans residues 404–424; the sequence is VIFVFLYGFTFFFANFGPNAT. The Cytoplasmic portion of the chain corresponds to 425–443; sequence TFIVPAEIFPARLRSTCHG. The helical transmembrane segment at 444–464 threads the bilayer; it reads ISAASGKAGAIIGAFGFLYAA. Over 465–484 the chain is Extracellular; the sequence is QPQDKAHVDAGYKPGIGVRN. Residues 485–505 form a helical membrane-spanning segment; sequence ALFVLAGCNLVGFLMTWMLVP. Residues 506–541 lie on the Cytoplasmic side of the membrane; sequence ESKGKSLEEMSGEADDEEASANGGATAVNSSGVEMV. The tract at residues 512–541 is disordered; the sequence is LEEMSGEADDEEASANGGATAVNSSGVEMV. The segment covering 515 to 524 has biased composition (acidic residues); the sequence is MSGEADDEEA. The segment covering 532 to 541 has biased composition (polar residues); sequence AVNSSGVEMV.

Belongs to the major facilitator superfamily. Phosphate:H(+) symporter (TC 2.A.1.9) family.

The protein resides in the membrane. High-affinity transporter for external inorganic phosphate. The chain is Probable inorganic phosphate transporter 1-12 (PHT1-12) from Oryza sativa subsp. japonica (Rice).